The chain runs to 765 residues: MASHIVGYPRMGPKRELKFALESFWDGKSTAEDLQKVSADLRSSIWKQMSAAGTKFIPSNTFAHYDQVLDTTAMLGAVPPRYGYTGGEIGLDVYFSMARGNASVPAMEMTKWFDTNYHYIVPELGPEVNFSYASHKAVNEYKEAKALGVDTVPVLVGPVSYLLLSKAAKGVDKSFELLSLLPKILPIYKEVITELKAAGATWIQLDEPVLVMDLEGQKLQAFTGAYAELESTLSGLNVLVETYFADIPAEAYKTLTSLKGVTAFGFDLVRGTKTLDLVKAGFPEGKYLFAGVVDGRNIWANDFAASLSTLQALEGIVGKDKLVVSTSCSLLHTAVDLINETKLDDEIKSWLAFAAQKVVEVNALAKALAGQKDEALFSANAAALASRRSSPRVTNEGVQKAAAALKGSDHRRATNVSARLDAQQKKLNLPILPTTTIGSFPQTVELRRVRREYKAKKVSEEDYVKAIKEEIKKVVDLQEELDIDVLVHGEPERNDMVEYFGEQLSGFAFTANGWVQSYGSRCVKPPVIYGDVSRPKAMTVFWSAMAQSMTSRPMKGMLTGPVTILNWSFVRNDQPRHETCYQIALAIKDEVEDLEKGGIGVIQIDEAALREGLPLRKSEHAFYLDWAVHSFRITNCGVQDSTQIHTHMCYSHFNDIIHSIIDMDADVITIENSRSDEKLLSVFREGVKYGAGIGPGVYDIHSPRIPSSEEIADRVNKMLAVLEQNILWVNPDCGLKTRKYTEVKPALKNMVDAAKLIRSQLASAK.

Residues Lys18 and Asn116 each contribute to the 5-methyltetrahydropteroyltri-L-glutamate site. Residue 437-439 (IGS) participates in L-homocysteine binding. Residues 437–439 (IGS) and Glu490 each bind L-methionine. 5-methyltetrahydropteroyltri-L-glutamate is bound by residues 521-522 (RC) and Trp567. Asp605 contacts L-homocysteine. Asp605 provides a ligand contact to L-methionine. Zn(2+)-binding residues include His647, Cys649, His658, Asp662, and Glu671. Catalysis depends on His701, which acts as the Proton donor. Cys733 contributes to the Zn(2+) binding site.

It belongs to the vitamin-B12 independent methionine synthase family. Zn(2+) is required as a cofactor. As to expression, expressed in leaves, stems, flowers, siliques and seeds.

It localises to the cytoplasm. The protein resides in the cytosol. It catalyses the reaction 5-methyltetrahydropteroyltri-L-glutamate + L-homocysteine = tetrahydropteroyltri-L-glutamate + L-methionine. It functions in the pathway amino-acid biosynthesis; L-methionine biosynthesis via de novo pathway; L-methionine from L-homocysteine (MetE route): step 1/1. Its function is as follows. Catalyzes the transfer of a methyl group from 5-methyltetrahydrofolate to homocysteine resulting in methionine formation. This chain is 5-methyltetrahydropteroyltriglutamate--homocysteine methyltransferase 1 (MS1), found in Arabidopsis thaliana (Mouse-ear cress).